The primary structure comprises 337 residues: Fructose-1,6-bisphosphatase class 1 (337 aa).

Residues E94, D116, L118, and D119 each contribute to the Mg(2+) site. Substrate contacts are provided by residues 119–122 (DGSS), N210, and K276. E282 is a Mg(2+) binding site.

The protein belongs to the FBPase class 1 family. In terms of assembly, homotetramer. The cofactor is Mg(2+).

It localises to the cytoplasm. The catalysed reaction is beta-D-fructose 1,6-bisphosphate + H2O = beta-D-fructose 6-phosphate + phosphate. The protein operates within carbohydrate biosynthesis; gluconeogenesis. This chain is Fructose-1,6-bisphosphatase class 1, found in Burkholderia lata (strain ATCC 17760 / DSM 23089 / LMG 22485 / NCIMB 9086 / R18194 / 383).